A 59-amino-acid polypeptide reads, in one-letter code: U17-myrmicitoxin-Tb1f (59 aa).

The signal sequence occupies residues 1-27 (MEKNRTTTFSVYLTIILFLISTFITMV). A propeptide spanning residues 28–31 (ITES) is cleaved from the precursor. His-58 carries the post-translational modification Histidine amide.

Expressed by the venom gland.

The protein resides in the secreted. This is U17-myrmicitoxin-Tb1f from Tetramorium bicarinatum (Tramp ant).